Reading from the N-terminus, the 274-residue chain is 2,3,4,5-tetrahydropyridine-2,6-dicarboxylate N-succinyltransferase (274 aa).

This sequence belongs to the transferase hexapeptide repeat family.

It is found in the cytoplasm. The enzyme catalyses (S)-2,3,4,5-tetrahydrodipicolinate + succinyl-CoA + H2O = (S)-2-succinylamino-6-oxoheptanedioate + CoA. It functions in the pathway amino-acid biosynthesis; L-lysine biosynthesis via DAP pathway; LL-2,6-diaminopimelate from (S)-tetrahydrodipicolinate (succinylase route): step 1/3. This chain is 2,3,4,5-tetrahydropyridine-2,6-dicarboxylate N-succinyltransferase, found in Escherichia coli (strain SMS-3-5 / SECEC).